The primary structure comprises 71 residues: Small ribosomal subunit protein bS21 (71 aa).

This sequence belongs to the bacterial ribosomal protein bS21 family.

The chain is Small ribosomal subunit protein bS21 from Thioalkalivibrio sulfidiphilus (strain HL-EbGR7).